The primary structure comprises 351 residues: Uroporphyrinogen decarboxylase (351 aa).

Substrate is bound by residues 26-30 (RQAGR), Asp76, Tyr153, Ser208, and His323.

The protein belongs to the uroporphyrinogen decarboxylase family. In terms of assembly, homodimer.

The protein localises to the cytoplasm. It catalyses the reaction uroporphyrinogen III + 4 H(+) = coproporphyrinogen III + 4 CO2. It participates in porphyrin-containing compound metabolism; protoporphyrin-IX biosynthesis; coproporphyrinogen-III from 5-aminolevulinate: step 4/4. Catalyzes the decarboxylation of four acetate groups of uroporphyrinogen-III to yield coproporphyrinogen-III. In Prochlorococcus marinus (strain MIT 9211), this protein is Uroporphyrinogen decarboxylase.